Consider the following 566-residue polypeptide: MKISRQAYADMFGPTVGDKVRLADTELWIEVEQDFTTYGEEVKFGGGKVIRDGQGQSQLLAAEVVDTVITNALIIDHWGIVKADVGLKDGRIAAIGKAGNPDVQPGVTIAIGASSEVIAGEGMILTAGGIDTHIHFICPQQIEEALMSGVTTMIGGGTGPATGTNATTCTSGPWHLARMLQAADAFPMNIGLTGKGNASLPEPLIEQVKAGAIGLKLHEDWGTTPASIDNCLSVADQYDVQVAIHTDTLNESGFVETTLGAFKGRTIHTYHTEGAGGGHAPDIIKACGFANVLPSSTNPTRPFTRNTIDEHLDMLMVCHHLDPSIAEDVAFAESRIRRETIAAEDILHDLGAFSMISSDSQAMGRVGEVITRTWQTADKMKKQRGPLPQDGEGNDNFRAKRYIAKYTINPAITHGISHEVGSVEVGKWADLVLWRPAFFGVKPTLILKGGAIAASLMGDANASIPTPQPVHYRPMFASYGGSLHATSLTFISQAAQASGLPEALGLKKKIAVVKGCRDVQKTDLIHNDYLPNIDVDPQTYQVKADGVLLWCEPAETLPMAQRYFLF.

Positions 128 to 566 (GGIDTHIHFI…LPMAQRYFLF (439 aa)) constitute a Urease domain. Ni(2+) is bound by residues histidine 133, histidine 135, and lysine 216. Lysine 216 is subject to N6-carboxylysine. Histidine 218 contacts substrate. Residues histidine 245 and histidine 271 each contribute to the Ni(2+) site. The active-site Proton donor is histidine 319. Aspartate 359 serves as a coordination point for Ni(2+).

It belongs to the metallo-dependent hydrolases superfamily. Urease alpha subunit family. In terms of assembly, heterotrimer of UreA (gamma), UreB (beta) and UreC (alpha) subunits. Three heterotrimers associate to form the active enzyme. The cofactor is Ni cation. Post-translationally, carboxylation allows a single lysine to coordinate two nickel ions.

It is found in the cytoplasm. It catalyses the reaction urea + 2 H2O + H(+) = hydrogencarbonate + 2 NH4(+). It participates in nitrogen metabolism; urea degradation; CO(2) and NH(3) from urea (urease route): step 1/1. The sequence is that of Urease subunit alpha from Pseudomonas fluorescens (strain Pf0-1).